The following is a 935-amino-acid chain: MDKDRPGDPALDDNMEEEVPSTSVVQEQVSAGDWENVLIELSDSSSEKEAEDAQLEPAQKGTKRKRVDHDAGGSAPARPMLPPQPDLPGREAILRRFPLDLRTLLQAIGAAATRIDTRAIDQFFGSQISNTEMYIMYAMAIRQAIRDRRRNPASRRDQAKWRLQTLAAGWPMGYQAYSSWMYSYTDHQTAPTFVQLQATLGCTGGRRCHVTFSAGTFKPPRCTPGDRQWLYVQSSVGNIVQSCNPRYSIFFDYMAIHRSLTKIWEEVLTPDQRVSFMEFLGFLQRTDLSYIKSFVSDALGTTSIQTPWIDDNSSTETAQAWNAGFLRGRAYGLDLLRTEGEHVEGATGETREESEDTESDGDDEDLPCIVSRGGPKVKRPPIFIRRLHRLLLMRAGKRTEQGKEVLEKARGSTYGTPRPPVPKPRPEVPQSDETATSHGSAQVPEPPTIHLAAQGMAYPLHEQRGMAPCPVAQAPHTPLPPVSPGDQLPGVSSDGRVACAPVPAPAGPIVRPWEPSLTQAAGQAFAPVRPQHMPVEPVPVPTVALERPVYPKPVRPAPPKIAMQGPGETSGIRRARERWRPAPWTPNPPRSPSQMSVRDRLARLRAEAQVKQASVEVQPPQVTQVSPQQPMEGPGAPFSQVADVVHTPGVPAMQPQYFDLPLIQPISQGAPVAPLRASMGPVPPVPATQPQYFDIPLTEPINQGASAAHFLPQQPMEGPLVPEQWMFPGAALSQSVRPGVAQSQYFDLPLTQPITHGAPAAHFLHQPPMEGPWVPEQWMFQGAPPSQGTDVVQHQLDALGYPLHALNHPGVPVSPAVNQYHLSQAAFGLPIDEDESGEGSDTSEPCEALDLSIHGRPCPQAPEWPVQGEGGQDATEVLDLSIHGRPRPRTPEWPVQGESGQNVTDHEPRRVVVSAIVHMCQDDEFPDLQDPPDEA.

Disordered stretches follow at residues 1–89 (MDKD…DLPG), 342–373 (HVEG…VSRG), 399–446 (TEQG…VPEP), 611–634 (KQAS…MEGP), and 883–908 (HGRP…DHEP). The segment covering 10 to 19 (ALDDNMEEEV) has biased composition (acidic residues). Polar residues predominate over residues 20-29 (PSTSVVQEQV). The segment covering 352-366 (EESEDTESDGDDEDL) has biased composition (acidic residues). The span at 399-410 (TEQGKEVLEKAR) shows a compositional bias: basic and acidic residues. Over residues 431–440 (SDETATSHGS) the composition is skewed to polar residues. Residues 615 to 630 (VEVQPPQVTQVSPQQP) are compositionally biased toward low complexity.

The protein belongs to the herpesviridae EBNA-3 family. In terms of assembly, interacts with human UCKL1. Interacts with host CTPB1; this interaction seems important for EBNA3-mediated transcriptional repression. Interacts with host RBPJ. Interacts with host USP12 and WDR48; these interactions form a deubiquitination-competent complex.

Its subcellular location is the host nucleus matrix. Functionally, plays an essential role for activation and immortalization of human B-cells. Represses transcription of viral promoters TP1 and Cp through interaction with host RBPJ, and inhibits EBNA2-mediated activation of these promoters. Since Cp is the promoter for all EBNA mRNAs, EBNA3A probably contributes to a negative autoregulatory control loop. This chain is Epstein-Barr nuclear antigen 3 (EBNA3), found in Homo sapiens (Human).